Here is a 293-residue protein sequence, read N- to C-terminus: ATP phosphoribosyltransferase (293 aa).

This sequence belongs to the ATP phosphoribosyltransferase family. Long subfamily. Requires Mg(2+) as cofactor.

Its subcellular location is the cytoplasm. It carries out the reaction 1-(5-phospho-beta-D-ribosyl)-ATP + diphosphate = 5-phospho-alpha-D-ribose 1-diphosphate + ATP. It participates in amino-acid biosynthesis; L-histidine biosynthesis; L-histidine from 5-phospho-alpha-D-ribose 1-diphosphate: step 1/9. Its activity is regulated as follows. Feedback inhibited by histidine. Its function is as follows. Catalyzes the condensation of ATP and 5-phosphoribose 1-diphosphate to form N'-(5'-phosphoribosyl)-ATP (PR-ATP). Has a crucial role in the pathway because the rate of histidine biosynthesis seems to be controlled primarily by regulation of HisG enzymatic activity. This Nitratidesulfovibrio vulgaris (strain DSM 19637 / Miyazaki F) (Desulfovibrio vulgaris) protein is ATP phosphoribosyltransferase.